A 1365-amino-acid polypeptide reads, in one-letter code: MGGKNKKHKAPGAAAMRAAVSASRARSAEAGAVGEAQSKKPVARPAPAVPTGAREPRVKQGPKIYSFNSANDSGGSANLDKSILKVVINNKLEQRIIGVINEHKKQNSDRGAISGRLSAKKLQDLYMALQAFSFKTKDIEDAMTNTLLHGGDLHSALDWLCLNLSDDALPEGFSQEFEEQQPKSRPKFQSVQIQATLSPPQQTKTKRQEEDPKIKPKKEETTVEVNMKEWILRYAEQQDEEEKGEGSKGLEEEEKFDPNQRYLNLAARLLDAKEQAAAFKLEKNKQGQKEAQEKIRKFQREMETLEDHPIFNPAIKISHQQNEKKKPAPATEAESALNLNLFEKSAAATEEEKGKKKEPHDVRNFDYTARSWTGKSPKQFLIDWVRKNLPKSPNPSFEKVAVGRYWKCRVRVVRSEDDVLVVCPTILTEDGMQAQHLGATLALYRLVKGQSVHQLLPPTYRDVWLEWSDEEKKREELNKMETNKPRDLFIAKLLNKLKQQQQQQQQQRPESEKGGSEDPEESWENLVSDEDLAALSLEPTSAEDLAPVRSLFRRLQSTPKYQRLLKERQQLPVFKHRDSIVETLKRHRVVVVAGETGSGKSTQVPHFLLEDLLLDECGARKCNIVCTQPRRISAVSLATRVCEELGCESGPGGRNSLCGYQIRMESRASESTRLLYCTTGVLLRKLQEDGLLADVSHVIVDEVHERSVQSDFLLVILKEILQKRSDLHLILMSATVDSDKFSTYFTHCPILRISGRSYPVEVFHLEDIVEETGFVLEKDSEYCQKFLEEEEEITINVTSKAGGVKKYQEYIPVQSGASPELNPFYQKYSSRTQHAILYMNPHKINLDLILELLVYLDKSPQFRNIEGAVLIFLPGLAHIQQLYDLLSSDRRFYSERYQVIALHSVLSTQDQAAAFMFPPPGVRKIVLATNIAETGITIPDVVFVIDTGRTKENKYHESSQMSSLVETFVSKASALQRQGRAGRVRDGFCFRLYTRERFEGFLDYSVPEILRVPLEELCLHIMKCDLGSPEDFLSKALDPPQLQVISNAMNLLRKIGACEPNEPKLTPLGQHLAALPVNVKIGKMLIFGAIFGCLEPVATLAAVMTEKSPFITPIGRKDEADLAKSSLAVADSDHLTIYNAYLGWKKAQQEGGFRSEISYCQRNFLNRTSLLTLEDVKQELMKLVKAAGFSSSPSWEGRKGPQTLSFQDIALLKAVLAAGLYDSVGKIMCTKSVDVTEKLACMVETAQGKAQVHPSSVNRDLQTYGWLLYQEKVRYTRVYLRETTLITPFPVLLFGGDIEVQHRERLLSVDGWIYFQAPVKIAVIFKQLRVLIDSVLRKKLENPKMSLENDKILQIITELIKTENN.

Over residues 1 to 10 the composition is skewed to basic residues; it reads MGGKNKKHKA. Disordered stretches follow at residues 1–74, 174–222, and 235–257; these read MGGK…NDSG, SQEF…EETT, and AEQQDEEEKGEGSKGLEEEEKFD. Composition is skewed to low complexity over residues 11–36 and 43–53; these read PGAAAMRAAVSASRARSAEAGAVGEA and ARPAPAVPTGA. Residues serine 69, serine 190, and serine 198 each carry the phosphoserine modification. The span at 187 to 203 shows a compositional bias: polar residues; sequence KFQSVQIQATLSPPQQT. Basic and acidic residues predominate over residues 206–222; the sequence is KRQEEDPKIKPKKEETT. A coiled-coil region spans residues 281-308; it reads LEKNKQGQKEAQEKIRKFQREMETLEDH. The disordered stretch occupies residues 500-524; that stretch reads QQQQQQQQRPESEKGGSEDPEESWE. Residues 581 to 754 form the Helicase ATP-binding domain; sequence VETLKRHRVV…FTHCPILRIS (174 aa). An ATP-binding site is contributed by 594 to 601; sequence GETGSGKS. Residues 701–704 carry the DEAH box motif; sequence DEVH. Residues 848–1025 enclose the Helicase C-terminal domain; the sequence is LILELLVYLD…ELCLHIMKCD (178 aa).

This sequence belongs to the DEAD box helicase family. DEAH subfamily. In terms of assembly, part of the 43S pre-initiation complex (PIC) that contains at least Met-tRNA, EIF1, EIF1A (EIF1AX or EIF1AY), EIF2S1, EIF2S2, EIF2S3, EIF3A, EIF3B, EIF3C, EIF3D, EIF3E, EIF3F, EIF3G, EIF3H, EIF3I, EIF3J, EIF3K, EIF3L, EIF3M, DHX29 and the 40S ribosomal subunit.

It localises to the cytoplasm. It catalyses the reaction ATP + H2O = ADP + phosphate + H(+). In terms of biological role, ATP-binding RNA helicase involved in translation initiation. Part of the 43S pre-initiation complex that is required for efficient initiation on mRNAs of higher eukaryotes with structured 5'-UTRs by promoting efficient NTPase-dependent 48S complex formation. Specifically binds to the 40S ribosome near the mRNA entrance. Does not possess a processive helicase activity. The sequence is that of ATP-dependent RNA helicase DHX29 from Mus musculus (Mouse).